The chain runs to 450 residues: 3-keto-steroid reductase erg27 (450 aa).

NADP(+) contacts are provided by leucine 25, threonine 53, and lysine 59. Active-site proton donor residues include serine 215 and tyrosine 238. NADP(+) is bound by residues tyrosine 238, lysine 242, and threonine 296. Lysine 242 (lowers pKa of active site Tyr) is an active-site residue.

This sequence belongs to the short-chain dehydrogenases/reductases (SDR) family. ERG27 subfamily. As to quaternary structure, heterotetramer of erg25, erg26, erg27 and erg28. Erg28 acts as a scaffold to tether erg27 and other 4,4-demethylation-related enzymes, forming a demethylation enzyme complex, in the endoplasmic reticulum.

The protein localises to the endoplasmic reticulum membrane. The protein resides in the lipid droplet. Its pathway is steroid metabolism; ergosterol biosynthesis. Functionally, sterol-C4-methyl oxidase; part of the third module of ergosterol biosynthesis pathway that includes the late steps of the pathway. Erg27 is a catalytic component of the C-4 demethylation complex that catalyzes the conversion of 4,4-dimethylfecosterol into fecosterol via 4-methylfecosterol. The third module or late pathway involves the ergosterol synthesis itself through consecutive reactions that mainly occur in the endoplasmic reticulum (ER) membrane. Firstly, the squalene synthase erg9 catalyzes the condensation of 2 farnesyl pyrophosphate moieties to form squalene, which is the precursor of all steroids. Squalene synthase is crucial for balancing the incorporation of farnesyl diphosphate (FPP) into sterol and nonsterol isoprene synthesis. Secondly, squalene is converted into lanosterol by the consecutive action of the squalene epoxidase erg1 and the lanosterol synthase erg7. Then, the delta(24)-sterol C-methyltransferase erg6 methylates lanosterol at C-24 to produce eburicol. Eburicol is the substrate of the sterol 14-alpha demethylase encoded by cyp51A and cyp51B, to yield 4,4,24-trimethyl ergosta-8,14,24(28)-trienol. The C-14 reductase erg24 then reduces the C14=C15 double bond which leads to 4,4-dimethylfecosterol. A sequence of further demethylations at C-4, involving the C-4 demethylation complex containing the C-4 methylsterol oxidases erg25A or erg25B, the sterol-4-alpha-carboxylate 3-dehydrogenase erg26 and the 3-keto-steroid reductase erg27, leads to the production of fecosterol via 4-methylfecosterol. The C-8 sterol isomerase erg2 then catalyzes the reaction which results in unsaturation at C-7 in the B ring of sterols and thus converts fecosterol to episterol. The sterol-C5-desaturase erg3B then catalyzes the introduction of a C-5 double bond in the B ring to produce 5-dehydroepisterol. The 2 other sterol-C5-desaturases, erg3A and erg3C, seem to be less important in ergosterol biosynthesis. The C-22 sterol desaturase erg5 further converts 5-dehydroepisterol into ergosta-5,7,22,24(28)-tetraen-3beta-ol by forming the C-22(23) double bond in the sterol side chain. Finally, ergosta-5,7,22,24(28)-tetraen-3beta-ol is substrate of the C-24(28) sterol reductases erg4A and erg4B to produce ergosterol. Possible alternative sterol biosynthetic pathways might exist from fecosterol to ergosterol, depending on the activities of the erg3 isoforms. This chain is 3-keto-steroid reductase erg27, found in Aspergillus fumigatus (strain ATCC MYA-4609 / CBS 101355 / FGSC A1100 / Af293) (Neosartorya fumigata).